The chain runs to 132 residues: ATP synthase epsilon chain, chloroplastic (132 aa).

Thr2 carries the post-translational modification N-acetylthreonine.

It belongs to the ATPase epsilon chain family. F-type ATPases have 2 components, CF(1) - the catalytic core - and CF(0) - the membrane proton channel. CF(1) has five subunits: alpha(3), beta(3), gamma(1), delta(1), epsilon(1). CF(0) has three main subunits: a, b and c.

Its subcellular location is the plastid. The protein localises to the chloroplast thylakoid membrane. Functionally, produces ATP from ADP in the presence of a proton gradient across the membrane. The chain is ATP synthase epsilon chain, chloroplastic from Arabidopsis thaliana (Mouse-ear cress).